Consider the following 616-residue polypeptide: tRNA 5-methylaminomethyl-2-thiouridine biosynthesis bifunctional protein MnmC (616 aa).

The interval 1–232 (MLRTIVPARL…KRHCMSARFA (232 aa)) is tRNA (mnm(5)s(2)U34)-methyltransferase. An FAD-dependent cmnm(5)s(2)U34 oxidoreductase region spans residues 249 to 616 (IGGGVAGAAA…ARFAGNRKTA (368 aa)).

In the N-terminal section; belongs to the methyltransferase superfamily. tRNA (mnm(5)s(2)U34)-methyltransferase family. The protein in the C-terminal section; belongs to the DAO family. Requires FAD as cofactor.

The protein localises to the cytoplasm. It carries out the reaction 5-aminomethyl-2-thiouridine(34) in tRNA + S-adenosyl-L-methionine = 5-methylaminomethyl-2-thiouridine(34) in tRNA + S-adenosyl-L-homocysteine + H(+). Catalyzes the last two steps in the biosynthesis of 5-methylaminomethyl-2-thiouridine (mnm(5)s(2)U) at the wobble position (U34) in tRNA. Catalyzes the FAD-dependent demodification of cmnm(5)s(2)U34 to nm(5)s(2)U34, followed by the transfer of a methyl group from S-adenosyl-L-methionine to nm(5)s(2)U34, to form mnm(5)s(2)U34. This is tRNA 5-methylaminomethyl-2-thiouridine biosynthesis bifunctional protein MnmC from Thiobacillus denitrificans (strain ATCC 25259 / T1).